The chain runs to 428 residues: CinA-like protein (428 aa).

Belongs to the CinA family.

The chain is CinA-like protein from Mycobacterium leprae (strain TN).